A 484-amino-acid chain; its full sequence is Calcium uniporter protein, mitochondrial (484 aa).

Residues 1 to 33 (MGHVLGGTLLAANRLARPPAVVLGKPRVCCWRA) constitute a mitochondrion transit peptide. Residues 34-304 (SPWPVIVSSA…CDLLAHKGAH (271 aa)) are Mitochondrial matrix-facing. Disordered stretches follow at residues 59-104 (ARYE…KGRL) and 188-227 (YTGGNKSNDGRREESNGNGSNVASYSGLGREGPSKGDTHW). Residues 61–82 (YEARGRSTTQRKVDDRPWHRES) show a composition bias toward basic and acidic residues. Residues 83 to 93 (SGSLPKSTSPD) show a composition bias toward polar residues. The chain crosses the membrane as a helical span at residues 305–326 (ALAKGGFAALAAWWGIVYYVTF). The Mitochondrial intermembrane segment spans residues 327 to 334 (HTDMGWDL). The short motif at 332–340 (WDLVEPITY) is the Selectivity filter element. A helical membrane pass occupies residues 335 to 355 (VEPITYLAGLASIMGGYLWFL). Residue E336 participates in Ca(2+) binding. The Mitochondrial matrix segment spans residues 356 to 484 (FISRDLSYKA…NEAAANVPGD (129 aa)). Basic and acidic residues-rich tracts occupy residues 426 to 435 (KEVLEEEKGG) and 452 to 462 (DHDHDHDHVSH). Positions 426–484 (KEVLEEEKGGKARKREQEDEDGDGDDDHDHDHDHVSHGAELQGQDILHANEAAANVPGD) are disordered.

This sequence belongs to the MCU (TC 1.A.77) family. In terms of assembly, homotetramer, assembles in a dimer or dimers configuration with two interfaces.

It localises to the mitochondrion inner membrane. It catalyses the reaction Ca(2+)(in) = Ca(2+)(out). With respect to regulation, inhibited by ruthenium red or its derivative Ru360. Highly selective calcium channel localized to the inner mitochondrial membrane, which mediates calcium uptake into the mitochondrial matrix. Mitochondrial calcium homeostasis plays key roles in cellular physiology and regulates ATP production, cytoplasmic calcium signals and activation of cell death pathways. Sufficient to operate as a pore-forming channel without the need of calcium-sensor or auxiliary subunit. The sequence is that of Calcium uniporter protein, mitochondrial from Metarhizium acridum (strain CQMa 102).